A 75-amino-acid chain; its full sequence is Putative membrane protein insertion efficiency factor (75 aa).

It belongs to the UPF0161 family.

The protein resides in the cell membrane. Its function is as follows. Could be involved in insertion of integral membrane proteins into the membrane. This Bacillus velezensis (strain DSM 23117 / BGSC 10A6 / LMG 26770 / FZB42) (Bacillus amyloliquefaciens subsp. plantarum) protein is Putative membrane protein insertion efficiency factor.